Reading from the N-terminus, the 233-residue chain is Superoxide dismutase [Mn], mitochondrial (233 aa).

The N-terminal 27 residues, 1 to 27 (MALRSLVTRKNLPSAFKAATGLGQLRG), are a transit peptide targeting the mitochondrion. Mn(2+) is bound by residues His55, His103, Asp192, and His196.

This sequence belongs to the iron/manganese superoxide dismutase family. Homotetramer. Requires Mn(2+) as cofactor. As to expression, present in all tissues examined (leaf, petiole, root, latex, callus) with young leaves showing the highest levels in intact plants.

It is found in the mitochondrion matrix. It carries out the reaction 2 superoxide + 2 H(+) = H2O2 + O2. Its function is as follows. Destroys superoxide anion radicals which are normally produced within the cells and which are toxic to biological systems. The polypeptide is Superoxide dismutase [Mn], mitochondrial (SODA) (Hevea brasiliensis (Para rubber tree)).